The following is a 392-amino-acid chain: tRNA (guanine-N(7)-)-methyltransferase (392 aa).

S-adenosyl-L-methionine-binding residues include E123, E148, and D175. Substrate-binding residues include K201 and D231.

Belongs to the class I-like SAM-binding methyltransferase superfamily. TrmB family.

It carries out the reaction guanosine(46) in tRNA + S-adenosyl-L-methionine = N(7)-methylguanosine(46) in tRNA + S-adenosyl-L-homocysteine. Its pathway is tRNA modification; N(7)-methylguanine-tRNA biosynthesis. Its function is as follows. Catalyzes the formation of N(7)-methylguanine at position 46 (m7G46) in tRNA. The chain is tRNA (guanine-N(7)-)-methyltransferase from Campylobacter jejuni subsp. jejuni serotype O:6 (strain 81116 / NCTC 11828).